The chain runs to 86 residues: Large ribosomal subunit protein bL27 (86 aa).

The span at 1-10 (MAQKKGGGST) shows a compositional bias: gly residues. A disordered region spans residues 1–21 (MAQKKGGGSTRNGRDSESKRL).

The protein belongs to the bacterial ribosomal protein bL27 family.

In Cupriavidus pinatubonensis (strain JMP 134 / LMG 1197) (Cupriavidus necator (strain JMP 134)), this protein is Large ribosomal subunit protein bL27.